Reading from the N-terminus, the 180-residue chain is CASP-like protein 5A1 (180 aa).

The Cytoplasmic segment spans residues 1-36 (MEVSHPAVHPVAVPPVLTEPPARVRMKDYQGMPGTL). The chain crosses the membrane as a helical span at residues 37–57 (GGLALRLGQLGFAVLSFSIMV). At 58 to 67 (STPDFSQVTA) the chain is on the extracellular side. Residues 68–88 (FCYLVAATVLQTLWSSITAVV) form a helical membrane-spanning segment. At 89 to 102 (DIYALSVRRSLHHS) the chain is on the cytoplasmic side. Residues 103-123 (LLVGLFAVGDGVTSTLTFAAA) form a helical membrane-spanning segment. The Extracellular segment spans residues 124 to 150 (CATAGITVLIDNDLDECGQNHCGRFEA). Residues 151-171 (AAAMAFLSWIMAAPSFLLAFW) traverse the membrane as a helical segment. Topologically, residues 172–180 (SFGNKIVCF) are cytoplasmic.

This sequence belongs to the Casparian strip membrane proteins (CASP) family. In terms of assembly, homodimer and heterodimers.

It localises to the cell membrane. The polypeptide is CASP-like protein 5A1 (Pteridium aquilinum subsp. aquilinum (Bracken fern)).